Consider the following 290-residue polypeptide: Arylamine N-acetyltransferase 2 (290 aa).

Catalysis depends on C68, which acts as the Acyl-thioester intermediate. The CoA site is built by T103 and G104. I106–H107 is a substrate binding site. Residues H107 and D122 contribute to the active site. CoA-binding residues include Y208, T214, and S287.

The protein belongs to the arylamine N-acetyltransferase family.

The protein resides in the cytoplasm. The catalysed reaction is an arylamine + acetyl-CoA = an N-acetylarylamine + CoA. The enzyme catalyses an N-hydroxyarylamine + acetyl-CoA = an N-acetoxyarylamine + CoA. Its function is as follows. Catalyzes the N- or O-acetylation of various arylamine and heterocyclic amine substrates, and participates in the detoxification of a plethora of hydrazine and arylamine drugs. The protein is Arylamine N-acetyltransferase 2 (NAT2) of Macaca mulatta (Rhesus macaque).